The sequence spans 477 residues: Ribulose bisphosphate carboxylase large chain (477 aa).

A propeptide spanning residues 1 to 2 (MS) is cleaved from the precursor. Proline 3 bears the N-acetylproline mark. Residue lysine 14 is modified to N6,N6,N6-trimethyllysine. Substrate contacts are provided by asparagine 123 and threonine 173. Catalysis depends on lysine 175, which acts as the Proton acceptor. Position 177 (lysine 177) interacts with substrate. Mg(2+) is bound by residues lysine 201, aspartate 203, and glutamate 204. At lysine 201 the chain carries N6-carboxylysine. Residue histidine 294 is the Proton acceptor of the active site. Substrate contacts are provided by arginine 295, histidine 327, and serine 379.

The protein belongs to the RuBisCO large chain family. Type I subfamily. Heterohexadecamer of 8 large chains and 8 small chains; disulfide-linked. The disulfide link is formed within the large subunit homodimers. Mg(2+) serves as cofactor. Post-translationally, the disulfide bond which can form in the large chain dimeric partners within the hexadecamer appears to be associated with oxidative stress and protein turnover.

The protein resides in the plastid. The protein localises to the chloroplast. It catalyses the reaction 2 (2R)-3-phosphoglycerate + 2 H(+) = D-ribulose 1,5-bisphosphate + CO2 + H2O. The catalysed reaction is D-ribulose 1,5-bisphosphate + O2 = 2-phosphoglycolate + (2R)-3-phosphoglycerate + 2 H(+). Functionally, ruBisCO catalyzes two reactions: the carboxylation of D-ribulose 1,5-bisphosphate, the primary event in carbon dioxide fixation, as well as the oxidative fragmentation of the pentose substrate in the photorespiration process. Both reactions occur simultaneously and in competition at the same active site. This chain is Ribulose bisphosphate carboxylase large chain, found in Manihot esculenta (Cassava).